The primary structure comprises 258 residues: Acyl-[acyl-carrier-protein]--UDP-N-acetylglucosamine O-acyltransferase (258 aa).

Belongs to the transferase hexapeptide repeat family. LpxA subfamily. In terms of assembly, homotrimer.

The protein resides in the cytoplasm. It carries out the reaction a (3R)-hydroxyacyl-[ACP] + UDP-N-acetyl-alpha-D-glucosamine = a UDP-3-O-[(3R)-3-hydroxyacyl]-N-acetyl-alpha-D-glucosamine + holo-[ACP]. The protein operates within glycolipid biosynthesis; lipid IV(A) biosynthesis; lipid IV(A) from (3R)-3-hydroxytetradecanoyl-[acyl-carrier-protein] and UDP-N-acetyl-alpha-D-glucosamine: step 1/6. Involved in the biosynthesis of lipid A, a phosphorylated glycolipid that anchors the lipopolysaccharide to the outer membrane of the cell. This is Acyl-[acyl-carrier-protein]--UDP-N-acetylglucosamine O-acyltransferase from Pseudomonas entomophila (strain L48).